Here is a 72-residue protein sequence, read N- to C-terminus: Crustacean hyperglycemic hormone (72 aa).

Pyrrolidone carboxylic acid; partial is present on Gln-1. 3 disulfides stabilise this stretch: Cys-7-Cys-43, Cys-23-Cys-39, and Cys-26-Cys-52. A Valine amide modification is found at Val-72.

This sequence belongs to the arthropod CHH/MIH/GIH/VIH hormone family. The N-terminus forms pyrrolidone carboxylic acid in isoform CHH-II and is free in isoform CHH-I. Produced by the medulla terminalis X-organ in the eyestalks and transported to the sinus gland where they are stored and released.

It localises to the secreted. Functionally, hormone found in the sinus gland of isopods and decapods which controls the blood sugar level. Has a secretagogue action over the amylase released from the midgut gland. May act as a stress hormone and may be involved in the control of molting and reproduction. This Cancer pagurus (Rock crab) protein is Crustacean hyperglycemic hormone.